A 304-amino-acid polypeptide reads, in one-letter code: Acetyl-coenzyme A carboxylase carboxyl transferase subunit beta (304 aa).

One can recognise a CoA carboxyltransferase N-terminal domain in the interval 25–294 (VWTKCDSCGQ…PSVVESKADT (270 aa)). Zn(2+) is bound by residues cysteine 29, cysteine 32, cysteine 48, and cysteine 51. The segment at 29 to 51 (CDSCGQVLYRAELERNLEVCPKC) adopts a C4-type zinc-finger fold.

Belongs to the AccD/PCCB family. As to quaternary structure, acetyl-CoA carboxylase is a heterohexamer composed of biotin carboxyl carrier protein (AccB), biotin carboxylase (AccC) and two subunits each of ACCase subunit alpha (AccA) and ACCase subunit beta (AccD). The cofactor is Zn(2+).

Its subcellular location is the cytoplasm. The catalysed reaction is N(6)-carboxybiotinyl-L-lysyl-[protein] + acetyl-CoA = N(6)-biotinyl-L-lysyl-[protein] + malonyl-CoA. The protein operates within lipid metabolism; malonyl-CoA biosynthesis; malonyl-CoA from acetyl-CoA: step 1/1. In terms of biological role, component of the acetyl coenzyme A carboxylase (ACC) complex. Biotin carboxylase (BC) catalyzes the carboxylation of biotin on its carrier protein (BCCP) and then the CO(2) group is transferred by the transcarboxylase to acetyl-CoA to form malonyl-CoA. The chain is Acetyl-coenzyme A carboxylase carboxyl transferase subunit beta from Yersinia pestis bv. Antiqua (strain Nepal516).